Reading from the N-terminus, the 81-residue chain is Putative membrane protein insertion efficiency factor (81 aa).

The protein belongs to the UPF0161 family.

It localises to the cell inner membrane. Its function is as follows. Could be involved in insertion of integral membrane proteins into the membrane. This chain is Putative membrane protein insertion efficiency factor, found in Legionella pneumophila (strain Lens).